The following is a 117-amino-acid chain: Mini-circle uncharacterized 12.9 kDa protein (117 aa).

The protein is Mini-circle uncharacterized 12.9 kDa protein of Streptomyces coelicolor (strain ATCC BAA-471 / A3(2) / M145).